Here is a 331-residue protein sequence, read N- to C-terminus: L-lactate dehydrogenase A chain (331 aa).

Residues 29-57 and R98 each bind NAD(+); that span reads GMVG…MEDK. Substrate-binding residues include R105, N137, and R168. NAD(+) is bound at residue N137. H192 acts as the Proton acceptor in catalysis. T247 lines the substrate pocket.

This sequence belongs to the LDH/MDH superfamily. LDH family. Homotetramer.

The protein localises to the cytoplasm. It carries out the reaction (S)-lactate + NAD(+) = pyruvate + NADH + H(+). It participates in fermentation; pyruvate fermentation to lactate; (S)-lactate from pyruvate: step 1/1. Interconverts simultaneously and stereospecifically pyruvate and lactate with concomitant interconversion of NADH and NAD(+). The polypeptide is L-lactate dehydrogenase A chain (ldha) (Chaenocephalus aceratus (Blackfin icefish)).